Here is a 535-residue protein sequence, read N- to C-terminus: Potassium channel subfamily K member 10 (535 aa).

The Cytoplasmic portion of the chain corresponds to 1–68; sequence MYFSYIGYFF…GLQTVMKWKT (68 aa). The helical transmembrane segment at 69–89 threads the bilayer; it reads VVAIFVVVVVYLVTGGLVFRA. Residues 151-177 constitute an intramembrane region (pore-forming); the sequence is LGSAFFFAGTVITTIGYGNIAPSTEGG. K(+)-binding residues include Thr-164, Ile-165, Gly-166, and Tyr-167. Residues 164 to 169 are selectivity filter 1; the sequence is TIGYGN. The helical transmembrane segment at 179 to 199 threads the bilayer; it reads IFCILYAIFGIPLFGFLLAGI. Residues 200–230 lie on the Cytoplasmic side of the membrane; sequence GDQLGTIFGKSIARVEKVFRKKQVSQTKIRV. The helical transmembrane segment at 231-251 threads the bilayer; the sequence is ISTILFILAGCIVFVTIPAVI. The pore-forming intramembrane region spans 260 to 291; sequence ALESIYFVVVTLTTVGFGDFVAGGNAGINYRE. 4 residues coordinate K(+): Thr-273, Val-274, Gly-275, and Phe-276. The interval 273–278 is selectivity filter 2; the sequence is TVGFGD. The chain crosses the membrane as a helical span at residues 296-316; the sequence is LVWFWILVGLAYFAAVLSMIG. The Cytoplasmic portion of the chain corresponds to 317–535; that stretch reads DWLRVLSKKT…ENNSLLEDRN (219 aa). 2 disordered regions span residues 410–438 and 510–535; these read QESINNRPNNLRLKGPEQLTKHGQGASED and EMENGMVPTDTKDQGLENNSLLEDRN. A compositionally biased stretch (polar residues) spans 525–535; that stretch reads LENNSLLEDRN.

As to quaternary structure, homodimer; disulfide-linked. Forms heterodimers with other 2-pore domain K(+) channel subunits, such as KCNK2, KCNK4 and KCNK18. In terms of tissue distribution, detected in dorsal root ganglia (DRG) neurons (at protein level).

The protein localises to the cell membrane. The enzyme catalyses K(+)(in) = K(+)(out). It carries out the reaction Rb(+)(in) = Rb(+)(out). The catalysed reaction is Cs(+)(in) = Cs(+)(out). With respect to regulation, activated by stimuli such as mechanical stretch, acidic pH and polyunsaturated free fatty acids. Activated by a dihydroacridine analog, ML67-33. Inhibited by polycationic dye ruthenium red. Selectively activated by T2A3 (2-[(4-chloro-3-methylphenyl)amino] benzoic acid). Its function is as follows. K(+) channel that conducts voltage-dependent outward rectifying currents upon membrane depolarization. Voltage sensing is coupled to K(+) electrochemical gradient in an 'ion flux gating' mode where outward but not inward ion flow opens the gate. Converts to voltage-independent 'leak' conductance mode upon stimulation by various stimuli including mechanical membrane stretch, acidic pH, heat and lipids. Homo- and heterodimerizes to form functional channels with distinct regulatory and gating properties. In trigeminal ganglia sensory neurons, the heterodimer of KCNK10/TREK-2 and KCNK18/TRESK inhibits neuronal firing and neurogenic inflammation by stabilizing the resting membrane potential at K(+) equilibrium potential as well as by regulating the threshold of action potentials and the spike frequency. Permeable to other monovalent ions such as Rb(+) and Cs(+). The chain is Potassium channel subfamily K member 10 from Mus musculus (Mouse).